A 154-amino-acid polypeptide reads, in one-letter code: 3-hydroxyacyl-[acyl-carrier-protein] dehydratase FabZ (154 aa).

H55 is an active-site residue.

It belongs to the thioester dehydratase family. FabZ subfamily.

It is found in the cytoplasm. It catalyses the reaction a (3R)-hydroxyacyl-[ACP] = a (2E)-enoyl-[ACP] + H2O. In terms of biological role, involved in unsaturated fatty acids biosynthesis. Catalyzes the dehydration of short chain beta-hydroxyacyl-ACPs and long chain saturated and unsaturated beta-hydroxyacyl-ACPs. The polypeptide is 3-hydroxyacyl-[acyl-carrier-protein] dehydratase FabZ (Nitratidesulfovibrio vulgaris (strain DSM 19637 / Miyazaki F) (Desulfovibrio vulgaris)).